A 150-amino-acid chain; its full sequence is 1,4-dihydroxy-2-naphthoyl-CoA hydrolase (150 aa).

The active site involves aspartate 19.

It belongs to the 4-hydroxybenzoyl-CoA thioesterase family. DHNA-CoA hydrolase subfamily.

It carries out the reaction 1,4-dihydroxy-2-naphthoyl-CoA + H2O = 1,4-dihydroxy-2-naphthoate + CoA + H(+). It participates in cofactor biosynthesis; phylloquinone biosynthesis. Its pathway is quinol/quinone metabolism; 1,4-dihydroxy-2-naphthoate biosynthesis; 1,4-dihydroxy-2-naphthoate from chorismate: step 7/7. Catalyzes the hydrolysis of 1,4-dihydroxy-2-naphthoyl-CoA (DHNA-CoA) to 1,4-dihydroxy-2-naphthoate (DHNA), a reaction involved in phylloquinone (vitamin K1) biosynthesis. The polypeptide is 1,4-dihydroxy-2-naphthoyl-CoA hydrolase (Prochlorococcus marinus (strain MIT 9515)).